A 300-amino-acid polypeptide reads, in one-letter code: uncharacterized protein (300 aa).

This is an uncharacterized protein from Ictalurid herpesvirus 1 (strain Auburn) (IcHV-1).